The chain runs to 304 residues: 6-dehydroglucose reductase (304 aa).

NADP(+) is bound by residues tryptophan 28, arginine 29, and aspartate 56. Tyrosine 61 functions as the Proton donor in the catalytic mechanism. Residues tyrosine 61, histidine 133, and arginine 134 each contribute to the D-glucose site. NADP(+) is bound by residues serine 163, asparagine 164, glutamine 185, serine 215, leucine 217, glycine 219, glycine 268, serine 269, glutamine 270, and arginine 274.

The protein belongs to the aldo/keto reductase family.

The catalysed reaction is D-glucose + NADP(+) = 6-dehydro-D-glucose + NADPH + H(+). In terms of biological role, part of the alkanesulfonate monooxygenase (sulfo-ASMO) pathway, a D-sulfoquinovose degradation pathway that enables the complete utilization of all carbons within sulfoquinovose (SQ) with concomitant production of inorganic sulfite. Catalyzes the NADP-dependent reduction of 6-dehydro-D-glucose to D-glucose. Can also catalyze the reversible reaction, the formation of 6-dehydro-D-glucose from D-glucose in the presence of NADP(+). In Novosphingobium aromaticivorans (strain ATCC 700278 / DSM 12444 / CCUG 56034 / CIP 105152 / NBRC 16084 / F199), this protein is 6-dehydroglucose reductase.